A 204-amino-acid polypeptide reads, in one-letter code: High frequency lysogenization protein HflD homolog (204 aa).

Belongs to the HflD family.

It localises to the cytoplasm. The protein localises to the cell inner membrane. The chain is High frequency lysogenization protein HflD homolog from Stenotrophomonas maltophilia (strain R551-3).